The chain runs to 147 residues: Hemoglobin subunit epsilon (147 aa).

Residues H3–H147 form the Globin domain. Phosphoserine is present on residues S14 and S51. Heme b contacts are provided by H64 and H93.

The protein belongs to the globin family. Red blood cells.

In terms of biological role, hemoglobin epsilon chain is an embryonic-type beta-type chain found in prenatal and neonatal marsupials. The sequence is that of Hemoglobin subunit epsilon (HBE1) from Notamacropus eugenii (Tammar wallaby).